Reading from the N-terminus, the 290-residue chain is Eukaryotic translation initiation factor 3 subunit G (290 aa).

Residues 1-34 form a disordered region; that stretch reads MSRLGNRAADWADDEEFDDPSALPAQQVTTNKDG. An RRM domain is found at 210–288; the sequence is ATLRVTNVSE…LILRVEFAKR (79 aa).

It belongs to the eIF-3 subunit G family. Component of the eukaryotic translation initiation factor 3 (eIF-3) complex.

It localises to the cytoplasm. Functionally, RNA-binding component of the eukaryotic translation initiation factor 3 (eIF-3) complex, which is involved in protein synthesis of a specialized repertoire of mRNAs and, together with other initiation factors, stimulates binding of mRNA and methionyl-tRNAi to the 40S ribosome. The eIF-3 complex specifically targets and initiates translation of a subset of mRNAs involved in cell proliferation. This subunit can bind 18S rRNA. The protein is Eukaryotic translation initiation factor 3 subunit G of Neosartorya fischeri (strain ATCC 1020 / DSM 3700 / CBS 544.65 / FGSC A1164 / JCM 1740 / NRRL 181 / WB 181) (Aspergillus fischerianus).